Consider the following 219-residue polypeptide: Occludin/ELL domain-containing protein 1 (219 aa).

The disordered stretch occupies residues 1 to 110; it reads MQIHAGPASR…DYELKYPPVT (110 aa). A compositionally biased stretch (low complexity) spans 17–43; the sequence is LARLSGPEATCNSRPAARGRQRAAAPR. A compositionally biased stretch (basic and acidic residues) spans 72–93; that stretch reads VFADELRPREPLHPEKHPRDLG. Residues 100–210 enclose the OCEL domain; that stretch reads PDYELKYPPV…QIRKFDDQQD (111 aa).

The protein belongs to the ELL/occludin family.

This is Occludin/ELL domain-containing protein 1 (Ocel1) from Mus musculus (Mouse).